The chain runs to 288 residues: ATP phosphoribosyltransferase (288 aa).

Belongs to the ATP phosphoribosyltransferase family. Long subfamily. The cofactor is Mg(2+).

It is found in the cytoplasm. The enzyme catalyses 1-(5-phospho-beta-D-ribosyl)-ATP + diphosphate = 5-phospho-alpha-D-ribose 1-diphosphate + ATP. The protein operates within amino-acid biosynthesis; L-histidine biosynthesis; L-histidine from 5-phospho-alpha-D-ribose 1-diphosphate: step 1/9. Feedback inhibited by histidine. In terms of biological role, catalyzes the condensation of ATP and 5-phosphoribose 1-diphosphate to form N'-(5'-phosphoribosyl)-ATP (PR-ATP). Has a crucial role in the pathway because the rate of histidine biosynthesis seems to be controlled primarily by regulation of HisG enzymatic activity. This chain is ATP phosphoribosyltransferase, found in Methanococcus maripaludis (strain DSM 14266 / JCM 13030 / NBRC 101832 / S2 / LL).